The primary structure comprises 208 residues: V-type ATP synthase subunit E (208 aa).

Belongs to the V-ATPase E subunit family.

In terms of biological role, produces ATP from ADP in the presence of a proton gradient across the membrane. In Chlamydia trachomatis serovar A (strain ATCC VR-571B / DSM 19440 / HAR-13), this protein is V-type ATP synthase subunit E.